Here is an 868-residue protein sequence, read N- to C-terminus: Leucine--tRNA ligase (868 aa).

Positions 42–52 match the 'HIGH' region motif; it reads PYPSGKLHMGH. The 'KMSKS' region signature appears at 627–631; the sequence is KMSKS. Residue Lys630 coordinates ATP.

The protein belongs to the class-I aminoacyl-tRNA synthetase family.

The protein localises to the cytoplasm. The catalysed reaction is tRNA(Leu) + L-leucine + ATP = L-leucyl-tRNA(Leu) + AMP + diphosphate. The polypeptide is Leucine--tRNA ligase (Pseudomonas syringae pv. syringae (strain B728a)).